A 451-amino-acid chain; its full sequence is Phosphoglucosamine mutase (451 aa).

The active-site Phosphoserine intermediate is Ser107. The Mg(2+) site is built by Ser107, Asp246, Asp248, and Asp250. The residue at position 107 (Ser107) is a Phosphoserine.

This sequence belongs to the phosphohexose mutase family. Mg(2+) is required as a cofactor. In terms of processing, activated by phosphorylation.

It carries out the reaction alpha-D-glucosamine 1-phosphate = D-glucosamine 6-phosphate. Catalyzes the conversion of glucosamine-6-phosphate to glucosamine-1-phosphate. The polypeptide is Phosphoglucosamine mutase (Burkholderia vietnamiensis (strain G4 / LMG 22486) (Burkholderia cepacia (strain R1808))).